A 214-amino-acid polypeptide reads, in one-letter code: Octanoyltransferase (214 aa).

Positions 29-214 (STTPDEIWIL…EHLQKQLMPT (186 aa)) constitute a BPL/LPL catalytic domain. Substrate is bound by residues 69–76 (RGGEITYH), 146–148 (ALG), and 159–161 (GLA). Residue cysteine 177 is the Acyl-thioester intermediate of the active site.

It belongs to the LipB family.

The protein localises to the cytoplasm. The enzyme catalyses octanoyl-[ACP] + L-lysyl-[protein] = N(6)-octanoyl-L-lysyl-[protein] + holo-[ACP] + H(+). It participates in protein modification; protein lipoylation via endogenous pathway; protein N(6)-(lipoyl)lysine from octanoyl-[acyl-carrier-protein]: step 1/2. Its function is as follows. Catalyzes the transfer of endogenously produced octanoic acid from octanoyl-acyl-carrier-protein onto the lipoyl domains of lipoate-dependent enzymes. Lipoyl-ACP can also act as a substrate although octanoyl-ACP is likely to be the physiological substrate. This chain is Octanoyltransferase, found in Polynucleobacter asymbioticus (strain DSM 18221 / CIP 109841 / QLW-P1DMWA-1) (Polynucleobacter necessarius subsp. asymbioticus).